A 252-amino-acid chain; its full sequence is Ribosomal RNA small subunit methyltransferase J (252 aa).

Residues 101–102 (RD), 117–118 (ER), 153–154 (SS), and Asp-171 contribute to the S-adenosyl-L-methionine site.

Belongs to the methyltransferase superfamily. RsmJ family.

It localises to the cytoplasm. The enzyme catalyses guanosine(1516) in 16S rRNA + S-adenosyl-L-methionine = N(2)-methylguanosine(1516) in 16S rRNA + S-adenosyl-L-homocysteine + H(+). In terms of biological role, specifically methylates the guanosine in position 1516 of 16S rRNA. The sequence is that of Ribosomal RNA small subunit methyltransferase J from Salmonella typhi.